Reading from the N-terminus, the 394-residue chain is Putative nickel insertion protein (394 aa).

The protein belongs to the LarC family.

The sequence is that of Putative nickel insertion protein from Syntrophotalea carbinolica (strain DSM 2380 / NBRC 103641 / GraBd1) (Pelobacter carbinolicus).